We begin with the raw amino-acid sequence, 278 residues long: S-formylglutathione hydrolase YeiG (278 aa).

Catalysis depends on charge relay system residues S145, D223, and H256.

Belongs to the esterase D family.

It carries out the reaction S-formylglutathione + H2O = formate + glutathione + H(+). Serine hydrolase involved in the detoxification of formaldehyde. Hydrolyzes S-formylglutathione to glutathione and formate. This chain is S-formylglutathione hydrolase YeiG (yeiG), found in Escherichia coli (strain UTI89 / UPEC).